The chain runs to 638 residues: 3D-(3,5/4)-trihydroxycyclohexane-1,2-dione hydrolase (638 aa).

Glutamate 67 lines the thiamine diphosphate pocket. The segment at 442 to 523 (SLPGDLQRLW…INIMLFDNSG (82 aa)) is thiamine pyrophosphate binding. Residues aspartate 494 and asparagine 521 each contribute to the Mg(2+) site.

It belongs to the TPP enzyme family. The cofactor is Mg(2+). Thiamine diphosphate serves as cofactor.

The catalysed reaction is 3D-3,5/4-trihydroxycyclohexane-1,2-dione + H2O = 5-deoxy-D-glucuronate + H(+). Its pathway is polyol metabolism; myo-inositol degradation into acetyl-CoA; acetyl-CoA from myo-inositol: step 3/7. Its function is as follows. Involved in the cleavage of the C1-C2 bond of 3D-(3,5/4)-trihydroxycyclohexane-1,2-dione (THcHDO) to yield 5-deoxy-glucuronate (5DG). This Listeria innocua serovar 6a (strain ATCC BAA-680 / CLIP 11262) protein is 3D-(3,5/4)-trihydroxycyclohexane-1,2-dione hydrolase.